The following is a 438-amino-acid chain: Flagellum-specific ATP synthase (438 aa).

The disordered stretch occupies residues 119–139; it reads GLSPVSTEQSPPNPMKRPPIR. 165-172 contributes to the ATP binding site; it reads AGSGVGKS.

It belongs to the ATPase alpha/beta chains family.

It localises to the cytoplasm. It catalyses the reaction ATP + H2O + 4 H(+)(in) = ADP + phosphate + 5 H(+)(out). Functionally, probable catalytic subunit of a protein translocase for flagellum-specific export, or a proton translocase involved in local circuits at the flagellum. This Bacillus subtilis (strain 168) protein is Flagellum-specific ATP synthase (fliI).